The chain runs to 129 residues: Small ribosomal subunit protein uS11 (129 aa).

The protein belongs to the universal ribosomal protein uS11 family. As to quaternary structure, part of the 30S ribosomal subunit. Interacts with proteins S7 and S18. Binds to IF-3.

Functionally, located on the platform of the 30S subunit, it bridges several disparate RNA helices of the 16S rRNA. Forms part of the Shine-Dalgarno cleft in the 70S ribosome. This Histophilus somni (strain 129Pt) (Haemophilus somnus) protein is Small ribosomal subunit protein uS11.